A 410-amino-acid chain; its full sequence is Arginine deiminase (410 aa).

Cys-400 acts as the Amidino-cysteine intermediate in catalysis.

It belongs to the arginine deiminase family.

It is found in the cytoplasm. It carries out the reaction L-arginine + H2O = L-citrulline + NH4(+). It participates in amino-acid degradation; L-arginine degradation via ADI pathway; carbamoyl phosphate from L-arginine: step 1/2. The chain is Arginine deiminase from Levilactobacillus brevis (strain ATCC 367 / BCRC 12310 / CIP 105137 / JCM 1170 / LMG 11437 / NCIMB 947 / NCTC 947) (Lactobacillus brevis).